The chain runs to 230 residues: Orotidine 5'-phosphate decarboxylase (230 aa).

Residues D11, K34, 61-70, T117, R179, Q188, G208, and R209 contribute to the substrate site; that span reads DLKLHDIPNT. K63 serves as the catalytic Proton donor.

This sequence belongs to the OMP decarboxylase family. Type 1 subfamily. In terms of assembly, homodimer.

It catalyses the reaction orotidine 5'-phosphate + H(+) = UMP + CO2. Its pathway is pyrimidine metabolism; UMP biosynthesis via de novo pathway; UMP from orotate: step 2/2. Its function is as follows. Catalyzes the decarboxylation of orotidine 5'-monophosphate (OMP) to uridine 5'-monophosphate (UMP). The chain is Orotidine 5'-phosphate decarboxylase from Streptococcus pyogenes serotype M6 (strain ATCC BAA-946 / MGAS10394).